The following is a 96-amino-acid chain: Nucleoid-associated protein DR_0199 (96 aa).

Belongs to the YbaB/EbfC family. In terms of assembly, homodimer.

It is found in the cytoplasm. Its subcellular location is the nucleoid. Its function is as follows. Binds to DNA and alters its conformation. May be involved in regulation of gene expression, nucleoid organization and DNA protection. In Deinococcus radiodurans (strain ATCC 13939 / DSM 20539 / JCM 16871 / CCUG 27074 / LMG 4051 / NBRC 15346 / NCIMB 9279 / VKM B-1422 / R1), this protein is Nucleoid-associated protein DR_0199.